The primary structure comprises 20 residues: FDKNQPWGVIRDLNVVNFKR.

The protein is Allergen Asp fl 2 of Aspergillus flavus.